The following is a 290-amino-acid chain: uncharacterized protein (290 aa).

Disordered regions lie at residues 1-98 and 209-236; these read MLGQ…SRRV and LSGQ…AATT. The segment covering 63–76 has biased composition (basic and acidic residues); sequence KPDRVRPGQRDRIG. Residues 87–97 are compositionally biased toward low complexity; that stretch reads AGQARAASSRR. Residues 261 to 281 traverse the membrane as a helical segment; sequence CILTALLAVSFHSIGVVIMTS.

It is found in the membrane. This is an uncharacterized protein from Homo sapiens (Human).